A 499-amino-acid polypeptide reads, in one-letter code: Probable cytosol aminopeptidase (499 aa).

Mn(2+)-binding residues include Lys-269 and Asp-274. Lys-281 is an active-site residue. Residues Asp-292, Asp-351, and Glu-353 each coordinate Mn(2+). Residue Arg-355 is part of the active site.

It belongs to the peptidase M17 family. The cofactor is Mn(2+).

The protein resides in the cytoplasm. It carries out the reaction Release of an N-terminal amino acid, Xaa-|-Yaa-, in which Xaa is preferably Leu, but may be other amino acids including Pro although not Arg or Lys, and Yaa may be Pro. Amino acid amides and methyl esters are also readily hydrolyzed, but rates on arylamides are exceedingly low.. The enzyme catalyses Release of an N-terminal amino acid, preferentially leucine, but not glutamic or aspartic acids.. In terms of biological role, presumably involved in the processing and regular turnover of intracellular proteins. Catalyzes the removal of unsubstituted N-terminal amino acids from various peptides. The sequence is that of Probable cytosol aminopeptidase from Actinobacillus pleuropneumoniae serotype 5b (strain L20).